We begin with the raw amino-acid sequence, 373 residues long: D-alanine--D-alanine ligase (373 aa).

Residues 156 to 363 (KKLLAADGLP…YPTLLATMIE (208 aa)) form the ATP-grasp domain. Residue 184 to 239 (CERLGLPVFVKPARGGSSIGVSRVSSWDQLPAAVARARRHDPKVIVEAAISGRELE) coordinates ATP. Residues Asp318, Glu330, and Asn332 each coordinate Mg(2+).

The protein belongs to the D-alanine--D-alanine ligase family. Mg(2+) is required as a cofactor. Requires Mn(2+) as cofactor.

The protein localises to the cytoplasm. It carries out the reaction 2 D-alanine + ATP = D-alanyl-D-alanine + ADP + phosphate + H(+). It functions in the pathway cell wall biogenesis; peptidoglycan biosynthesis. Its function is as follows. Cell wall formation. The protein is D-alanine--D-alanine ligase of Mycobacterium bovis (strain BCG / Pasteur 1173P2).